We begin with the raw amino-acid sequence, 615 residues long: tRNA uridine 5-carboxymethylaminomethyl modification enzyme MnmG (615 aa).

11 to 16 (GLGHAG) contributes to the FAD binding site. 278–292 (GPRYCPSLEDKVVRF) contributes to the NAD(+) binding site.

It belongs to the MnmG family. In terms of assembly, homodimer. Heterotetramer of two MnmE and two MnmG subunits. FAD serves as cofactor.

Its subcellular location is the cytoplasm. NAD-binding protein involved in the addition of a carboxymethylaminomethyl (cmnm) group at the wobble position (U34) of certain tRNAs, forming tRNA-cmnm(5)s(2)U34. This chain is tRNA uridine 5-carboxymethylaminomethyl modification enzyme MnmG, found in Myxococcus xanthus (strain DK1622).